The primary structure comprises 122 residues: Large ribosomal subunit protein uL18 (122 aa).

The disordered stretch occupies residues 1 to 25; the sequence is MSTLSRKQQTQKRHRRLRRHLSGTA. Positions 9–21 are enriched in basic residues; that stretch reads QTQKRHRRLRRHL.

It belongs to the universal ribosomal protein uL18 family. Part of the 50S ribosomal subunit; part of the 5S rRNA/L5/L18/L25 subcomplex. Contacts the 5S and 23S rRNAs.

Functionally, this is one of the proteins that bind and probably mediate the attachment of the 5S RNA into the large ribosomal subunit, where it forms part of the central protuberance. This Synechococcus sp. (strain CC9311) protein is Large ribosomal subunit protein uL18.